The following is a 381-amino-acid chain: Queuine tRNA-ribosyltransferase (381 aa).

D96 (proton acceptor) is an active-site residue. Residues 96-100 (DSGGF), D150, Q193, and G220 each bind substrate. Residues 251 to 257 (GVGAPDS) are RNA binding. The active-site Nucleophile is the D270. Residues 275–279 (TRIAR) form an RNA binding; important for wobble base 34 recognition region. C308, C310, C313, and H339 together coordinate Zn(2+).

Belongs to the queuine tRNA-ribosyltransferase family. In terms of assembly, homodimer. Within each dimer, one monomer is responsible for RNA recognition and catalysis, while the other monomer binds to the replacement base PreQ1. Requires Zn(2+) as cofactor.

The catalysed reaction is 7-aminomethyl-7-carbaguanine + guanosine(34) in tRNA = 7-aminomethyl-7-carbaguanosine(34) in tRNA + guanine. Its pathway is tRNA modification; tRNA-queuosine biosynthesis. Catalyzes the base-exchange of a guanine (G) residue with the queuine precursor 7-aminomethyl-7-deazaguanine (PreQ1) at position 34 (anticodon wobble position) in tRNAs with GU(N) anticodons (tRNA-Asp, -Asn, -His and -Tyr). Catalysis occurs through a double-displacement mechanism. The nucleophile active site attacks the C1' of nucleotide 34 to detach the guanine base from the RNA, forming a covalent enzyme-RNA intermediate. The proton acceptor active site deprotonates the incoming PreQ1, allowing a nucleophilic attack on the C1' of the ribose to form the product. After dissociation, two additional enzymatic reactions on the tRNA convert PreQ1 to queuine (Q), resulting in the hypermodified nucleoside queuosine (7-(((4,5-cis-dihydroxy-2-cyclopenten-1-yl)amino)methyl)-7-deazaguanosine). The sequence is that of Queuine tRNA-ribosyltransferase from Enterococcus faecalis (strain ATCC 700802 / V583).